A 164-amino-acid chain; its full sequence is UPF0303 protein Smed_2872 (164 aa).

This sequence belongs to the UPF0303 family.

In Sinorhizobium medicae (strain WSM419) (Ensifer medicae), this protein is UPF0303 protein Smed_2872.